The following is an 85-amino-acid chain: Small ribosomal subunit protein uS17 (85 aa).

This sequence belongs to the universal ribosomal protein uS17 family. Part of the 30S ribosomal subunit.

In terms of biological role, one of the primary rRNA binding proteins, it binds specifically to the 5'-end of 16S ribosomal RNA. The polypeptide is Small ribosomal subunit protein uS17 (Anaeromyxobacter sp. (strain Fw109-5)).